A 235-amino-acid chain; its full sequence is tRNA1(Val) (adenine(37)-N6)-methyltransferase (235 aa).

This sequence belongs to the methyltransferase superfamily. tRNA (adenine-N(6)-)-methyltransferase family.

Its subcellular location is the cytoplasm. It catalyses the reaction adenosine(37) in tRNA1(Val) + S-adenosyl-L-methionine = N(6)-methyladenosine(37) in tRNA1(Val) + S-adenosyl-L-homocysteine + H(+). In terms of biological role, specifically methylates the adenine in position 37 of tRNA(1)(Val) (anticodon cmo5UAC). The chain is tRNA1(Val) (adenine(37)-N6)-methyltransferase from Flavobacterium johnsoniae (strain ATCC 17061 / DSM 2064 / JCM 8514 / BCRC 14874 / CCUG 350202 / NBRC 14942 / NCIMB 11054 / UW101) (Cytophaga johnsonae).